Here is a 145-residue protein sequence, read N- to C-terminus: Large ribosomal subunit protein uL13 (145 aa).

This sequence belongs to the universal ribosomal protein uL13 family. In terms of assembly, part of the 50S ribosomal subunit.

Functionally, this protein is one of the early assembly proteins of the 50S ribosomal subunit, although it is not seen to bind rRNA by itself. It is important during the early stages of 50S assembly. The sequence is that of Large ribosomal subunit protein uL13 from Staphylococcus carnosus (strain TM300).